Consider the following 377-residue polypeptide: MRAAIFAAIGALLLSPASCQSGMEYDADNLAKPTLSIKTFRGAPQNSFEEFPLSAIEGWTGTTKTVKIKCPEELDSNLHVNNATMGYLSSPLSTKLIPAIYILVFAVGMPANAVTLWMLFRTRTIRMTIFYTNLAIADFLFCVTLPFRIAYHLNGNNWVFGEVMCRATTVIFYGNMYCSILLLACISINRYLAIVHPFTYRGLPKRTYALLTCGLVWTTVFLYMLPFFILKQEYYLVQQDITTCHDVHNTCESSSPFQLYYFISLAFFGFLIPFLVIIYCYTAIIWTLNAKDRRWLWYIKASLLTFVIFTICFAPSNIILIIHHANYYYSNTDALYFVYLIALCLGSLNSCLDPFLYFLMSKITDHSTAYLTMVKLS.

An N-terminal signal peptide occupies residues 1–19; it reads MRAAIFAAIGALLLSPASC. A propeptide spans 20–38 (removed for receptor activation); that stretch reads QSGMEYDADNLAKPTLSIK. Topologically, residues 39–94 are extracellular; it reads TFRGAPQNSFEEFPLSAIEGWTGTTKTVKIKCPEELDSNLHVNNATMGYLSSPLST. The N-linked (GlcNAc...) asparagine glycan is linked to N82. The helical transmembrane segment at 95–120 threads the bilayer; sequence KLIPAIYILVFAVGMPANAVTLWMLF. Over 121–127 the chain is Cytoplasmic; the sequence is RTRTIRM. The helical transmembrane segment at 128–147 threads the bilayer; the sequence is TIFYTNLAIADFLFCVTLPF. The Extracellular segment spans residues 148 to 166; that stretch reads RIAYHLNGNNWVFGEVMCR. A disulfide bond links C165 and C244. Residues 167 to 188 form a helical membrane-spanning segment; the sequence is ATTVIFYGNMYCSILLLACISI. The Cytoplasmic segment spans residues 189–205; it reads NRYLAIVHPFTYRGLPK. A helical transmembrane segment spans residues 206–229; it reads RTYALLTCGLVWTTVFLYMLPFFI. Residues 230–259 lie on the Extracellular side of the membrane; the sequence is LKQEYYLVQQDITTCHDVHNTCESSSPFQL. The chain crosses the membrane as a helical span at residues 260–279; sequence YYFISLAFFGFLIPFLVIIY. Topologically, residues 280-296 are cytoplasmic; sequence CYTAIIWTLNAKDRRWL. A helical transmembrane segment spans residues 297 to 321; the sequence is WYIKASLLTFVIFTICFAPSNIILI. Residues 322–335 lie on the Extracellular side of the membrane; that stretch reads IHHANYYYSNTDAL. The chain crosses the membrane as a helical span at residues 336–360; it reads YFVYLIALCLGSLNSCLDPFLYFLM. The Cytoplasmic portion of the chain corresponds to 361-377; that stretch reads SKITDHSTAYLTMVKLS.

Belongs to the G-protein coupled receptor 1 family. In terms of assembly, interacts with INSC/inscuteable and GPSM2. Post-translationally, a proteolytic cleavage generates a new N-terminus that functions as a tethered ligand.

The protein localises to the cell membrane. In terms of biological role, receptor for activated thrombin coupled to G proteins that stimulate phosphoinositide hydrolysis. This is Proteinase-activated receptor 3 (F2RL2) from Bos taurus (Bovine).